A 632-amino-acid polypeptide reads, in one-letter code: MSASTSTSTAASQDACYISLLGLAEYFRTSQPPNIKKCIQCLQALFTFMPPSKVEARTHLQMGQILMAYTKNIDLARQHLEKAWSISEPLPNFDVKFDTASLLAQLHLQTDKNSHQAKAMLRRAVELSQNNVYWHCKLLLQLAQIHASDREYSLASELLAVGAESADEASATYLKVLFLLSRAMILMIERKTNDVLALLNSAGQIIDNNIPNPHQKEYLKVFFLVLQVCYYLALGQVKTVKPSLKQLQMSIQTIMAPNWPSDEAIFGANQLEMFVWLPKEQLYVLVYLVTVSHSMMAGYMDKAQKYTEKALTQIEKLKQQEDKPILSVFKVILLEHIVMCRMVMGNRELAIREIAAARDVCMAAPQRTLLRRHSAQLHCLIGLYSMSTNLFEHAERQFVVCVSETSERDLKLFANLNLAIIYLRTKRDTDLKQILDAVSTENTHTYSSQALMGGFYYVQGLHAFHKNSFHEAKRFLRETLKMANAEDLNRLTSCSLVLLSHVFLSIGNSKESMNMVTPAMQLASKIPDIHVQLWGSAILKDLHRMSKDVQHEKDAYANHVKYSENLIADQRKCVQSAHHELVNWFQGDPPVTSGPPATPVLLMPESSVTSSVPVIASTSAAMQPAGQYGQFY.

TPR repeat units follow at residues 453 to 486 and 493 to 526; these read GGFY…ANAE and SCSL…ASKI.

It belongs to the SCC4/mau-2 family. Interacts with Nipped-B to form the cohesin loading complex.

The protein resides in the nucleus. The protein localises to the nucleoplasm. Functionally, required for association of the cohesin complex with chromatin during interphase. Plays a role in sister chromatid cohesion and normal progression through prometaphase. This is MAU2 chromatid cohesion factor homolog from Drosophila yakuba (Fruit fly).